We begin with the raw amino-acid sequence, 159 residues long: uncharacterized protein (159 aa).

3 consecutive transmembrane segments (helical) span residues 10–30 (FLSMFFMAILFFPAFNASLFF), 52–72 (MLILCFGFMSFSFLNIHVILL), and 96–116 (LTLIFLLIAIVIAPLIAPFVT).

It is found in the membrane. This is an uncharacterized protein from Escherichia coli (strain K12).